A 128-amino-acid chain; its full sequence is Transcription antitermination protein NusB (128 aa).

The protein belongs to the NusB family.

In terms of biological role, involved in transcription antitermination. Required for transcription of ribosomal RNA (rRNA) genes. Binds specifically to the boxA antiterminator sequence of the ribosomal RNA (rrn) operons. The polypeptide is Transcription antitermination protein NusB (Listeria welshimeri serovar 6b (strain ATCC 35897 / DSM 20650 / CCUG 15529 / CIP 8149 / NCTC 11857 / SLCC 5334 / V8)).